The sequence spans 558 residues: MAKSRRDRNSWGGFSEKSSDWSSEEEEPVRKAGPVQVLIVKDDHSFELDEAALNRILLSEAVRDKEVVAVSVAGAFRKGKSFLMDFMLRYMYNQESVDWVGDYNEPLTGFSWRGGSERETTGIQIWSEVFLINKLDGKKVAVLLMDTQGTFDSQSTLRDSATVFALSTMISSIQVYNLSQNVQEDDLQHLQLFTEYGRLAMEETFLKPFQSLIFLVRDWSFPYEFSYGADGGAKFLEKRLKVSGNQHEELQNVRKHIHSCFTNISCFLLPHPGLKVATNPNFDGKLKEIDDEFIKNLKILIPWLLSPESLDIKEINGNKITCRGLLEYFKAYIKIYQGEELPHPKSMLQATAEANNLAAVATAKDTYNKKMEEICGGDKPFLAPNDLQTKHLQLKEDSVKLFRGVKKMGGEEFSRRYLQQLESEIDELYIQYIKHNDSKNIFHAARTPATLFVVIFITYVIAGVTGFIGLDIIASLCNMIMGLTLITLCTWAYIRYSGEYRELGAVIDQVAAALWDQGSTNEALYKLYSAAATHRHLYQQAFPAPKSEPTEQPEKKKI.

Residues 1–29 (MAKSRRDRNSWGGFSEKSSDWSSEEEEPV) form a disordered region. The N-terminal hypervariable region (HVR) stretch occupies residues 1 to 34 (MAKSRRDRNSWGGFSEKSSDWSSEEEEPVRKAGP). Residues 1-449 (MAKSRRDRNS…NIFHAARTPA (449 aa)) lie on the Cytoplasmic side of the membrane. Phosphoserine occurs at positions 10, 22, and 23. One can recognise a GB1/RHD3-type G domain in the interval 64-309 (DKEVVAVSVA…LIPWLLSPES (246 aa)). GDP contacts are provided by Arg77, Lys78, Gly79, Lys80, Ser81, Phe82, Gln148, Arg217, Asp218, Val276, and Asn279. GTP contacts are provided by Arg77, Lys78, Gly79, Lys80, Ser81, and Phe82. Residue Ser81 coordinates Mg(2+). Residues Arg217, Asp218, and Val276 each coordinate GTP. The segment at 347 to 438 (MLQATAEANN…YIQYIKHNDS (92 aa)) is 3HB (three-helix bundle) domain. Lys395 bears the N6-acetyllysine mark. Residues 412-439 (EFSRRYLQQLESEIDELYIQYIKHNDSK) are a coiled coil. The segment at 439–447 (KNIFHAART) is linker. Residues 450-470 (TLFVVIFITYVIAGVTGFIGL) traverse the membrane as a helical segment. Residue Asp471 is a topological domain, lumenal. The helical transmembrane segment at 472–492 (IIASLCNMIMGLTLITLCTWA) threads the bilayer. Over 493 to 558 (YIRYSGEYRE…PTEQPEKKKI (66 aa)) the chain is Cytoplasmic. Positions 521 to 558 (NEALYKLYSAAATHRHLYQQAFPAPKSEPTEQPEKKKI) are autoinhibitory domain.

This sequence belongs to the TRAFAC class dynamin-like GTPase superfamily. GB1/RHD3 GTPase family. GB1 subfamily. As to quaternary structure, monomeric and homodimeric. The homodimer, transiently formed by two molecules on opposing membranes, is the active form mediating ER membrane fusion. Interacts with REEP1, REEP5, RTN3 and RTN4 (via the transmembrane region); these proteins are involved in endoplasmic reticulum tubular network organization. Interacts with ZFYVE27; both proteins are involved in endoplasmic reticulum tubular network organization. Interacts with ARL6IP1; both proteins are involved in endoplasmic reticulum tubular network organization. Interacts with SPAST; the interaction is direct, could recruit SPAST to Golgi membranes. Interacts (via N-terminal region) with MAP4K4 (via CNH regulatory domain). May interact with TMED2. Interacts with CPT1C. Phosphorylated. Phosphorylation, by different kinases, of the N-terminal hypervariable region (HVR) regulates the ATL1-mediated membrane tethering step. As to expression, detected in brain where it is abundant in lamina V of the cerebral cortex. Also expressed within the hippocampus, mainly in pyramidal neurons in CA1 and CA3. Weakly expressed in the striatum and more robustly in amygdala and several thalamic nuclei. Also detected in several mesopontine nuclei (at protein level).

Its subcellular location is the endoplasmic reticulum membrane. The protein resides in the golgi apparatus membrane. It localises to the cell projection. It is found in the axon. It carries out the reaction GTP + H2O = GDP + phosphate + H(+). Its function is as follows. Atlastin-1 (ATL1) is a membrane-anchored GTPase that mediates the GTP-dependent fusion of endoplasmic reticulum (ER) membranes, maintaining the continuous ER network. It facilitates the formation of three-way junctions where ER tubules intersect. Two atlastin-1 on neighboring ER tubules bind GTP and form loose homodimers through the GB1/RHD3-type G domains and 3HB regions. Upon GTP hydrolysis, the 3HB regions tighten, pulling the membranes together to drive their fusion. After fusion, the homodimer disassembles upon release of inorganic phosphate (Pi). Subsequently, GDP dissociates, resetting the monomers to a conformation ready for a new fusion cycle. May also regulate more or less directly Golgi biogenesis. Indirectly regulates axonal development. The polypeptide is Atlastin-1 (Rattus norvegicus (Rat)).